Reading from the N-terminus, the 95-residue chain is RING finger protein Z (95 aa).

Gly2 carries the N-myristoyl glycine; by host lipid modification. Residues Cys38 to Cys74 form an RING-type; atypical zinc finger. The PTAP/PSAP motif signature appears at Pro88–Pro91.

The protein belongs to the arenaviridae Z protein family. As to quaternary structure, interacts with protein NP; this interaction probably directs the encapsidated genome to budding sites. Interacts (via RING domain) with polymerase L; this interaction inhibits viral transcription and replication, Z partially blocks the product exit tunnel for the releasing nascent RNA product. Interacts with the glycoprotein complex; this interaction plays a role in virion budding. Interacts with host eIF4E; this interaction results in eIF4E reduced affinity for its substrate, the 5'-m7 G cap structure. Interacts (via late-budding domain) with host TSG101; this interaction is essential for budding and release of viral particles. Interacts with host RPLP0; this interaction may serve to load ribosome-like particles inside the virion. Interacts with host PML; this interaction induces PML bodies redistribution in the cytoplasm upon viral infection. Post-translationally, myristoylation is required for the role of RING finger protein Z in assembly and budding.

The protein localises to the virion. It localises to the host cytoplasm. It is found in the host perinuclear region. The protein resides in the host cell membrane. Functionally, plays a crucial role in virion assembly and budding. Expressed late in the virus life cycle, it acts as an inhibitor of viral transcription and RNA synthesis by interacting with the viral polymerase L. Presumably recruits the NP encapsidated genome to cellular membranes at budding sites via direct interaction with NP. Plays critical roles in the final steps of viral release by interacting with host TSG101, a member of the vacuolar protein-sorting pathway and using other cellular host proteins involved in vesicle formation pathway. The budding of the virus progeny occurs after association of protein Z with the viral glycoprotein complex SSP-GP1-GP2 at the cell periphery, step that requires myristoylation of protein Z. Also selectively represses protein production by associating with host eIF4E. In cell-based minigenome assay, has an inhibitory effect on the ribonucleoprotein machinery (vRNP), which is responsible for the replication and transcription of the viral genome. The protein is RING finger protein Z of Neotoma (wood rats).